A 377-amino-acid polypeptide reads, in one-letter code: Leukocyte elastase inhibitor (377 aa).

The residue at position 1 (methionine 1) is an N-acetylmethionine. Lysine 136 bears the N6-acetyllysine mark. Serine 298 carries the post-translational modification Phosphoserine. Positions 349–377 (EFVADHPFIFFIRHKPSSNILFLGRLSSP) are CARD-binding motif (CBM).

The protein belongs to the serpin family. Ov-serpin subfamily. In terms of assembly, monomer. Interacts (via C-terminus) with CASP1; CASP4 (via CARD domain) and CASP5; these interactions regulate the activity of inflammatory caspases. Interacts with PRTN3. Interacts with GZMH.

Its subcellular location is the secreted. The protein resides in the cytoplasm. It localises to the cytolytic granule. The protein localises to the early endosome. In terms of biological role, neutrophil serine protease inhibitor that plays an essential role in the regulation of the innate immune response, inflammation and cellular homeostasis. Acts primarily to protect the cell from proteases released in the cytoplasm during stress or infection. These proteases are important in killing microbes but when released from granules, these potent enzymes also destroy host proteins and contribute to mortality. Regulates the activity of the neutrophil proteases elastase, cathepsin G, proteinase-3, chymase, chymotrypsin, and kallikrein-3. Also acts as a potent intracellular inhibitor of GZMH by directly blocking its proteolytic activity. During inflammation, limits the activity of inflammatory caspases CASP1, CASP4 and CASP5 by suppressing their caspase-recruitment domain (CARD) oligomerization and enzymatic activation. When secreted, promotes the proliferation of beta-cells via its protease inhibitory function. The chain is Leukocyte elastase inhibitor (SERPINB1) from Bos taurus (Bovine).